The primary structure comprises 450 residues: Glucose-6-phosphate isomerase (450 aa).

The active-site Proton donor is E290. Active-site residues include H311 and K425.

Belongs to the GPI family.

It localises to the cytoplasm. The enzyme catalyses alpha-D-glucose 6-phosphate = beta-D-fructose 6-phosphate. It functions in the pathway carbohydrate biosynthesis; gluconeogenesis. The protein operates within carbohydrate degradation; glycolysis; D-glyceraldehyde 3-phosphate and glycerone phosphate from D-glucose: step 2/4. Functionally, catalyzes the reversible isomerization of glucose-6-phosphate to fructose-6-phosphate. This is Glucose-6-phosphate isomerase from Limosilactobacillus fermentum (Lactobacillus fermentum).